A 200-amino-acid polypeptide reads, in one-letter code: dITP/XTP pyrophosphatase (200 aa).

Position 8 to 13 (8 to 13) interacts with substrate; it reads TGNQGK. D69 functions as the Proton acceptor in the catalytic mechanism. Mg(2+) is bound at residue D69. Residues S70, 154–157, K177, and 182–183 each bind substrate; these read FGYD and HR.

It belongs to the HAM1 NTPase family. In terms of assembly, homodimer. It depends on Mg(2+) as a cofactor.

It catalyses the reaction XTP + H2O = XMP + diphosphate + H(+). The catalysed reaction is dITP + H2O = dIMP + diphosphate + H(+). The enzyme catalyses ITP + H2O = IMP + diphosphate + H(+). Functionally, pyrophosphatase that catalyzes the hydrolysis of nucleoside triphosphates to their monophosphate derivatives, with a high preference for the non-canonical purine nucleotides XTP (xanthosine triphosphate), dITP (deoxyinosine triphosphate) and ITP. Seems to function as a house-cleaning enzyme that removes non-canonical purine nucleotides from the nucleotide pool, thus preventing their incorporation into DNA/RNA and avoiding chromosomal lesions. The sequence is that of dITP/XTP pyrophosphatase from Vibrio vulnificus (strain CMCP6).